We begin with the raw amino-acid sequence, 808 residues long: uncharacterized protein (808 aa).

The EF-hand 1 domain occupies Ser-6–Arg-41. TPR repeat units follow at residues Phe-234–Asp-267, Arg-269–Gly-301, Pro-310–His-343, Phe-344–Tyr-377, Ala-378–His-411, Val-412–His-445, and Arg-447–Val-479. Positions Ala-600 to Gly-635 constitute an EF-hand 2 domain. The stretch at Phe-773–Cys-794 forms a coiled coil.

This is an uncharacterized protein from Arabidopsis thaliana (Mouse-ear cress).